A 212-amino-acid polypeptide reads, in one-letter code: ATP phosphoribosyltransferase (212 aa).

Belongs to the ATP phosphoribosyltransferase family. Short subfamily. Heteromultimer composed of HisG and HisZ subunits.

It localises to the cytoplasm. It carries out the reaction 1-(5-phospho-beta-D-ribosyl)-ATP + diphosphate = 5-phospho-alpha-D-ribose 1-diphosphate + ATP. The protein operates within amino-acid biosynthesis; L-histidine biosynthesis; L-histidine from 5-phospho-alpha-D-ribose 1-diphosphate: step 1/9. In terms of biological role, catalyzes the condensation of ATP and 5-phosphoribose 1-diphosphate to form N'-(5'-phosphoribosyl)-ATP (PR-ATP). Has a crucial role in the pathway because the rate of histidine biosynthesis seems to be controlled primarily by regulation of HisG enzymatic activity. The chain is ATP phosphoribosyltransferase from Prochlorococcus marinus (strain MIT 9312).